Consider the following 614-residue polypeptide: 4-hydroxy-3-methylbut-2-en-1-yl diphosphate synthase (flavodoxin) (614 aa).

Residues C522, C525, C556, and E563 each contribute to the [4Fe-4S] cluster site.

This sequence belongs to the IspG family. [4Fe-4S] cluster is required as a cofactor.

It carries out the reaction (2E)-4-hydroxy-3-methylbut-2-enyl diphosphate + oxidized [flavodoxin] + H2O + 2 H(+) = 2-C-methyl-D-erythritol 2,4-cyclic diphosphate + reduced [flavodoxin]. The protein operates within isoprenoid biosynthesis; isopentenyl diphosphate biosynthesis via DXP pathway; isopentenyl diphosphate from 1-deoxy-D-xylulose 5-phosphate: step 5/6. Functionally, converts 2C-methyl-D-erythritol 2,4-cyclodiphosphate (ME-2,4cPP) into 1-hydroxy-2-methyl-2-(E)-butenyl 4-diphosphate. The chain is 4-hydroxy-3-methylbut-2-en-1-yl diphosphate synthase (flavodoxin) from Phocaeicola vulgatus (strain ATCC 8482 / DSM 1447 / JCM 5826 / CCUG 4940 / NBRC 14291 / NCTC 11154) (Bacteroides vulgatus).